The following is a 55-amino-acid chain: Metallothionein-1 (55 aa).

The protein belongs to the metallothionein superfamily. Type 11 family.

In Yarrowia lipolytica (strain CLIB 122 / E 150) (Yeast), this protein is Metallothionein-1 (MTP1).